A 206-amino-acid chain; its full sequence is Small ribosomal subunit protein uS4A (206 aa).

One can recognise an S4 RNA-binding domain in the interval 98 to 164 (MRLDNVVYRL…EKFKTFAENP (67 aa)).

It belongs to the universal ribosomal protein uS4 family. As to quaternary structure, part of the 30S ribosomal subunit. Contacts protein S5. The interaction surface between S4 and S5 is involved in control of translational fidelity.

Functionally, one of the primary rRNA binding proteins, it binds directly to 16S rRNA where it nucleates assembly of the body of the 30S subunit. In terms of biological role, with S5 and S12 plays an important role in translational accuracy. This is Small ribosomal subunit protein uS4A from Clostridium botulinum (strain ATCC 19397 / Type A).